The primary structure comprises 347 residues: NADH-ubiquinone oxidoreductase chain 2 (347 aa).

11 helical membrane-spanning segments follow: residues 1–21 (MNPL…LITA), 25–45 (HWFL…PVLT), 55–75 (AAIK…MAIL), 96–116 (TMML…FWVP), 123–143 (TLMS…SIMY), 145–165 (IFPV…IMVG), 178–198 (ILAY…PYNP), 200–220 (ITIF…LALN), 237–257 (LTWL…LPPL), 274–294 (GTLI…YFYM), and 324–344 (FLLP…PLTF).

This sequence belongs to the complex I subunit 2 family. In terms of assembly, core subunit of respiratory chain NADH dehydrogenase (Complex I) which is composed of 45 different subunits. Interacts with TMEM242.

It is found in the mitochondrion inner membrane. The catalysed reaction is a ubiquinone + NADH + 5 H(+)(in) = a ubiquinol + NAD(+) + 4 H(+)(out). Core subunit of the mitochondrial membrane respiratory chain NADH dehydrogenase (Complex I) which catalyzes electron transfer from NADH through the respiratory chain, using ubiquinone as an electron acceptor. Essential for the catalytic activity and assembly of complex I. The sequence is that of NADH-ubiquinone oxidoreductase chain 2 from Hylobates lar (Lar gibbon).